The sequence spans 435 residues: Apparent malate synthase (435 aa).

E159 and N180 together coordinate Mg(2+). E159 is a substrate binding site.

It belongs to the HpcH/HpaI aldolase family. Mg(2+) is required as a cofactor. The cofactor is Mn(2+). Co(2+) serves as cofactor. It depends on Ca(2+) as a cofactor.

It carries out the reaction (S)-malyl-CoA = glyoxylate + acetyl-CoA. The enzyme catalyses (S)-malyl-CoA + H2O = (S)-malate + CoA + H(+). Its function is as follows. Involved in the methylaspartate cycle. Catalyzes the biosynthesis of malate in two steps. In the first reaction acetyl-CoA is condensed reversibly with glyoxylate to form (S)-malyl-CoA. In the second reaction (S)-malyl-CoA is hydrolyzed to malate and CoA. It can also catalyze the condensation of propionyl-CoA with glyoxylate and of acetyl-CoA with pyruvate, however the CoA-ester hydrolysis reaction is highly specific for (S)-malyl-CoA. The sequence is that of Apparent malate synthase (aceB) from Haloarcula marismortui (strain ATCC 43049 / DSM 3752 / JCM 8966 / VKM B-1809) (Halobacterium marismortui).